Reading from the N-terminus, the 378-residue chain is MQDFLPFSKPAIGDAEISAVCEVLKSGWITTGPKSHELEQQFCDTYGCQHAVALNSATAGMHVTLMALGIGPGDEVITPSQTWVSTINLITLLGAEPVFVDVDRDTLMTSAELIAPLITVNTKAIIPVHYAGAPVDLDPILKLARQYDIPVIEDAAHAIGTRYRDRWIGATGTAIFSFHAIKNLTCAEGGMLVTDDKALADKVRMLKFHGLGVDAFDRMTLGSKPQAEVITPGFKYNLTDINAAIALIQLARLPELNARRAGLVARYQEKLAGLPLAPLAIPTYPHLHAWHLFMVRVDPERCGLDRDQLMQALQERGIGTGLHFRAAHTQKYYRERYPALSLPHTEWNSSRLCTLPLFPDMTLADVDRVVAALTDILE.

N6-(pyridoxal phosphate)lysine is present on Lys182.

The protein belongs to the DegT/DnrJ/EryC1 family. ArnB subfamily. Homodimer. It depends on pyridoxal 5'-phosphate as a cofactor.

The enzyme catalyses UDP-4-amino-4-deoxy-beta-L-arabinose + 2-oxoglutarate = UDP-beta-L-threo-pentopyranos-4-ulose + L-glutamate. It functions in the pathway nucleotide-sugar biosynthesis; UDP-4-deoxy-4-formamido-beta-L-arabinose biosynthesis; UDP-4-deoxy-4-formamido-beta-L-arabinose from UDP-alpha-D-glucuronate: step 2/3. Its pathway is bacterial outer membrane biogenesis; lipopolysaccharide biosynthesis. Functionally, catalyzes the conversion of UDP-4-keto-arabinose (UDP-Ara4O) to UDP-4-amino-4-deoxy-L-arabinose (UDP-L-Ara4N). The modified arabinose is attached to lipid A and is required for resistance to polymyxin and cationic antimicrobial peptides. The polypeptide is UDP-4-amino-4-deoxy-L-arabinose--oxoglutarate aminotransferase (Aeromonas salmonicida (strain A449)).